The sequence spans 88 residues: LYR motif-containing protein 2 (88 aa).

Residues 1–19 (MAASRLPPATLTLKQFVRR) constitute a mitochondrion transit peptide.

Belongs to the complex I LYR family.

Its subcellular location is the mitochondrion. In terms of biological role, involved in efficient integration of the N-module into mitochondrial respiratory chain complex I. The chain is LYR motif-containing protein 2 (LYRM2) from Homo sapiens (Human).